Consider the following 673-residue polypeptide: MFQDNPLLAQLKQQIRENIPKKEGVIRASDRGFGFLEVDEKTSYFVPPPYMKKVMHGDRVSALIRTEKEKEVAEPDALLEQSVTRFVARVKMFRDRLNVVADHPLIKDAIKARVKKGLDEKEFKEGDWVVATLKRHALVDGNFSAEITQTIASQEDHNVPWWVVLARHNLAQVEPADLPEWKVIEEEELPRTDLTATPFFTIDGAKTKDMDDALAIRKLDNGWELLVAIADPTAYVAEGSELDKEAAQRAFTVYMPGRNVPMIPRTLSDELCSLKEGEERNTLCARLLIAEDGLLLEETEFFAARISSHARLTYDDVSDWAEHGKQLDIDAGVLAQLPLMKAMTEARIAWRTEHALVFPDRPDYDFELGENGEVLAIHVEPRRIANRMVEESMIAANICAGRVLGKQVGYGIFNVHTGFDEESLDGAIDLLKSAEAPFEKEEIASLSGFCALRRWIDNLDTRWLDGKIRRFQSYALMSAEPGAHYGLGLDAYATWTSPIRKYGDMVNHRLLKAVIAGKTPGERPSLELTEHLTACRRLHRMVERDIGDWLYVRYLKADAGTDKVFNAEIIDVMRAGLKLRLRENGAVVFMPARHILDNKDRLECNWDNGRVYLDKTEVVYELGQIIEVKLTEAVEETRSLIAKPAVELVPGPAPVAPTSEADATPADEAPKAE.

The 326-residue stretch at 191–516 (RTDLTATPFF…NHRLLKAVIA (326 aa)) folds into the RNB domain. In terms of domain architecture, S1 motif spans 562 to 645 (DKVFNAEIID…ETRSLIAKPA (84 aa)). The tract at residues 650 to 673 (PGPAPVAPTSEADATPADEAPKAE) is disordered.

It belongs to the RNR ribonuclease family. RNase II subfamily.

The protein resides in the cytoplasm. The enzyme catalyses Exonucleolytic cleavage in the 3'- to 5'-direction to yield nucleoside 5'-phosphates.. Involved in mRNA degradation. Hydrolyzes single-stranded polyribonucleotides processively in the 3' to 5' direction. The protein is Exoribonuclease 2 of Aeromonas hydrophila subsp. hydrophila (strain ATCC 7966 / DSM 30187 / BCRC 13018 / CCUG 14551 / JCM 1027 / KCTC 2358 / NCIMB 9240 / NCTC 8049).